The following is a 1416-amino-acid chain: 1-phosphatidylinositol 4,5-bisphosphate phosphodiesterase eta-2 (1416 aa).

A necessary for plasma membrane localization region spans residues 1–155; that stretch reads MSGPWPSPDS…WVTGLRYLMA (155 aa). The 109-residue stretch at 47 to 155 folds into the PH domain; the sequence is GAMQEGMQMV…WVTGLRYLMA (109 aa). EF-hand domains follow at residues 169 to 204 and 205 to 241; these read TRDQ…LNVN and LPRQ…MSTR. The Ca(2+) site is built by Asp-182, Asn-184, Asp-186, Ser-188, and Glu-193. Positions 326–471 constitute a PI-PLC X-box domain; that stretch reads QDMTQPLSHY…LKGKILVKGK (146 aa). His-341 is an active-site residue. Ca(2+) is bound by residues Asn-342, Glu-371, and Asp-373. His-385 is an active-site residue. Residue Glu-420 coordinates Ca(2+). Lys-469 and Lys-471 together coordinate substrate. Residues Ser-487 and Ser-491 each carry the phosphoserine modification. Residues 535 to 620 are disordered; that stretch reads DPNNFSVSTL…RGATRQKKTM (86 aa). Residues 537–546 show a composition bias toward polar residues; the sequence is NNFSVSTLSP. Positions 581–592 are enriched in basic residues; that stretch reads SRRKKKGSKLKK. 2 positions are modified to phosphoserine: Ser-595 and Ser-605. The PI-PLC Y-box domain occupies 626–740; that stretch reads LSDLVKYTKS…GYVLKPGCMC (115 aa). Substrate-binding residues include Ser-653 and Arg-680. Positions 740-869 constitute a C2 domain; the sequence is CQGVFNPNSE…PGYRHVYLEG (130 aa). Residues Ile-784, Asp-786, Asp-810, Asp-839, His-840, and Asp-841 each contribute to the Ca(2+) site. Disordered regions lie at residues 905 to 1109, 1121 to 1222, and 1315 to 1405; these read GSLD…GGWR, YSDA…LQPR, and ITSP…GPAS. The segment covering 1011-1021 has biased composition (pro residues); that stretch reads APGPGPPPPAA. Residues 1073–1083 show a composition bias toward polar residues; it reads GSQTDGRSQPR. Low complexity predominate over residues 1143–1166; that stretch reads VSSSSSMSSSDTVIDLSLPSLGLG. Polar residues predominate over residues 1199 to 1208; it reads KSKSNPNLRA. Gly residues predominate over residues 1324 to 1333; that stretch reads AGEGVAGGPG.

Ca(2+) serves as cofactor. In terms of tissue distribution, expressed in retina and kidney.

Its subcellular location is the cytoplasm. The protein resides in the cell membrane. It catalyses the reaction a 1,2-diacyl-sn-glycero-3-phospho-(1D-myo-inositol-4,5-bisphosphate) + H2O = 1D-myo-inositol 1,4,5-trisphosphate + a 1,2-diacyl-sn-glycerol + H(+). Activity is stimulated by GNB1:GNG2. Its function is as follows. The production of the second messenger molecules diacylglycerol (DAG) and inositol 1,4,5-trisphosphate (IP3) is mediated by activated phosphatidylinositol-specific phospholipase C enzymes. This phospholipase activity is very sensitive to calcium. May be important for formation and maintenance of the neuronal network in the postnatal brain. The polypeptide is 1-phosphatidylinositol 4,5-bisphosphate phosphodiesterase eta-2 (Homo sapiens (Human)).